The chain runs to 513 residues: ATP synthase subunit alpha (513 aa).

169 to 176 (GDRQTGKT) lines the ATP pocket.

It belongs to the ATPase alpha/beta chains family. As to quaternary structure, F-type ATPases have 2 components, CF(1) - the catalytic core - and CF(0) - the membrane proton channel. CF(1) has five subunits: alpha(3), beta(3), gamma(1), delta(1), epsilon(1). CF(0) has three main subunits: a(1), b(2) and c(9-12). The alpha and beta chains form an alternating ring which encloses part of the gamma chain. CF(1) is attached to CF(0) by a central stalk formed by the gamma and epsilon chains, while a peripheral stalk is formed by the delta and b chains.

Its subcellular location is the cell inner membrane. The enzyme catalyses ATP + H2O + 4 H(+)(in) = ADP + phosphate + 5 H(+)(out). Produces ATP from ADP in the presence of a proton gradient across the membrane. The alpha chain is a regulatory subunit. In Thioalkalivibrio sulfidiphilus (strain HL-EbGR7), this protein is ATP synthase subunit alpha.